We begin with the raw amino-acid sequence, 354 residues long: Peptide chain release factor 1 (354 aa).

Gln-232 carries the post-translational modification N5-methylglutamine.

The protein belongs to the prokaryotic/mitochondrial release factor family. In terms of processing, methylated by PrmC. Methylation increases the termination efficiency of RF1.

The protein localises to the cytoplasm. Functionally, peptide chain release factor 1 directs the termination of translation in response to the peptide chain termination codons UAG and UAA. The sequence is that of Peptide chain release factor 1 from Phytoplasma australiense.